The sequence spans 354 residues: UDP-3-O-acylglucosamine N-acyltransferase (354 aa).

The active-site Proton acceptor is the His245.

This sequence belongs to the transferase hexapeptide repeat family. LpxD subfamily. As to quaternary structure, homotrimer.

It carries out the reaction a UDP-3-O-[(3R)-3-hydroxyacyl]-alpha-D-glucosamine + a (3R)-hydroxyacyl-[ACP] = a UDP-2-N,3-O-bis[(3R)-3-hydroxyacyl]-alpha-D-glucosamine + holo-[ACP] + H(+). Its pathway is bacterial outer membrane biogenesis; LPS lipid A biosynthesis. In terms of biological role, catalyzes the N-acylation of UDP-3-O-acylglucosamine using 3-hydroxyacyl-ACP as the acyl donor. Is involved in the biosynthesis of lipid A, a phosphorylated glycolipid that anchors the lipopolysaccharide to the outer membrane of the cell. This chain is UDP-3-O-acylglucosamine N-acyltransferase, found in Anaeromyxobacter dehalogenans (strain 2CP-C).